Consider the following 368-residue polypeptide: tRNA-specific 2-thiouridylase MnmA (368 aa).

ATP-binding positions include 11 to 18 and methionine 37; that span reads GMSGGVDS. Residues 97-99 are interaction with target base in tRNA; it reads NPD. Cysteine 102 (nucleophile) is an active-site residue. Cysteine 102 and cysteine 199 form a disulfide bridge. Glycine 127 provides a ligand contact to ATP. Positions 149-151 are interaction with tRNA; it reads KDQ. The active-site Cysteine persulfide intermediate is cysteine 199. Positions 311–312 are interaction with tRNA; that stretch reads RY.

This sequence belongs to the MnmA/TRMU family. In terms of assembly, interacts with TusE.

It is found in the cytoplasm. The enzyme catalyses S-sulfanyl-L-cysteinyl-[protein] + uridine(34) in tRNA + AH2 + ATP = 2-thiouridine(34) in tRNA + L-cysteinyl-[protein] + A + AMP + diphosphate + H(+). In terms of biological role, catalyzes the 2-thiolation of uridine at the wobble position (U34) of tRNA(Lys), tRNA(Glu) and tRNA(Gln), leading to the formation of s(2)U34, the first step of tRNA-mnm(5)s(2)U34 synthesis. Sulfur is provided by IscS, via a sulfur-relay system. Binds ATP and its substrate tRNAs. This is tRNA-specific 2-thiouridylase MnmA from Escherichia coli O1:K1 / APEC.